The primary structure comprises 695 residues: Elongation factor G (695 aa).

The tr-type G domain maps to K8–I282. Residues A17–T24, D81–H85, and N135–D138 contribute to the GTP site. Positions P285–D304 are disordered.

Belongs to the TRAFAC class translation factor GTPase superfamily. Classic translation factor GTPase family. EF-G/EF-2 subfamily.

It localises to the cytoplasm. In terms of biological role, catalyzes the GTP-dependent ribosomal translocation step during translation elongation. During this step, the ribosome changes from the pre-translocational (PRE) to the post-translocational (POST) state as the newly formed A-site-bound peptidyl-tRNA and P-site-bound deacylated tRNA move to the P and E sites, respectively. Catalyzes the coordinated movement of the two tRNA molecules, the mRNA and conformational changes in the ribosome. The polypeptide is Elongation factor G (Finegoldia magna (strain ATCC 29328 / DSM 20472 / WAL 2508) (Peptostreptococcus magnus)).